Here is a 226-residue protein sequence, read N- to C-terminus: MKFAVIVFPGSNCDLDMYHAVKDVLGEEAEYVFHTETSLEGFDGVLLPGGFSYGDYLRCGSIAQFSPIMAEVKRFAEEGRPVLGVCNGFQVLVEAGLLPGVLMRNRDLKFMCKTVDLVVENNETMFTSEYAAQETIRVPIAHGEGNYYCDDATLAALKANGQIAFTYKENPNGSVENIAGITNEAGNVLGMMPHPERAVEALLGGEDGKRLFTSIVKWGARHVTYN.

In terms of domain architecture, Glutamine amidotransferase type-1 spans 3–225 (FAVIVFPGSN…VKWGARHVTY (223 aa)). Cys-86 functions as the Nucleophile in the catalytic mechanism. Catalysis depends on residues His-194 and Glu-196.

In terms of assembly, part of the FGAM synthase complex composed of 1 PurL, 1 PurQ and 2 PurS subunits.

The protein localises to the cytoplasm. It carries out the reaction N(2)-formyl-N(1)-(5-phospho-beta-D-ribosyl)glycinamide + L-glutamine + ATP + H2O = 2-formamido-N(1)-(5-O-phospho-beta-D-ribosyl)acetamidine + L-glutamate + ADP + phosphate + H(+). The enzyme catalyses L-glutamine + H2O = L-glutamate + NH4(+). The protein operates within purine metabolism; IMP biosynthesis via de novo pathway; 5-amino-1-(5-phospho-D-ribosyl)imidazole from N(2)-formyl-N(1)-(5-phospho-D-ribosyl)glycinamide: step 1/2. Part of the phosphoribosylformylglycinamidine synthase complex involved in the purines biosynthetic pathway. Catalyzes the ATP-dependent conversion of formylglycinamide ribonucleotide (FGAR) and glutamine to yield formylglycinamidine ribonucleotide (FGAM) and glutamate. The FGAM synthase complex is composed of three subunits. PurQ produces an ammonia molecule by converting glutamine to glutamate. PurL transfers the ammonia molecule to FGAR to form FGAM in an ATP-dependent manner. PurS interacts with PurQ and PurL and is thought to assist in the transfer of the ammonia molecule from PurQ to PurL. The chain is Phosphoribosylformylglycinamidine synthase subunit PurQ from Exiguobacterium sp. (strain ATCC BAA-1283 / AT1b).